The chain runs to 518 residues: Cytochrome P450 1A1 (518 aa).

Residues 33–44 (SKPRVPKGLKRL) form a mitochondrial targeting signal region. A glycan (O-linked (GlcNAc) serine) is linked at Ser71. A substrate-binding site is contributed by Phe228. Cys461 is a heme binding site.

It belongs to the cytochrome P450 family. In terms of assembly, interacts with cytosolic chaperones HSP70 and HSP90; this interaction is required for initial targeting to mitochondria. Interacts (via mitochondrial targeting signal) with TOMM40 (via N-terminus); this interaction is required for translocation across the mitochondrial outer membrane. Heme is required as a cofactor.

It is found in the endoplasmic reticulum membrane. The protein localises to the mitochondrion inner membrane. The protein resides in the microsome membrane. It localises to the cytoplasm. The catalysed reaction is an organic molecule + reduced [NADPH--hemoprotein reductase] + O2 = an alcohol + oxidized [NADPH--hemoprotein reductase] + H2O + H(+). It carries out the reaction estrone + reduced [NADPH--hemoprotein reductase] + O2 = 2-hydroxyestrone + oxidized [NADPH--hemoprotein reductase] + H2O + H(+). It catalyses the reaction estrone + reduced [NADPH--hemoprotein reductase] + O2 = 4-hydroxyestrone + oxidized [NADPH--hemoprotein reductase] + H2O + H(+). The enzyme catalyses estrone + reduced [NADPH--hemoprotein reductase] + O2 = 6alpha-hydroxyestrone + oxidized [NADPH--hemoprotein reductase] + H2O + H(+). The catalysed reaction is estrone + reduced [NADPH--hemoprotein reductase] + O2 = 15alpha-hydroxyestrone + oxidized [NADPH--hemoprotein reductase] + H2O + H(+). It carries out the reaction estrone + reduced [NADPH--hemoprotein reductase] + O2 = 16alpha-hydroxyestrone + oxidized [NADPH--hemoprotein reductase] + H2O + H(+). It catalyses the reaction 17beta-estradiol + reduced [NADPH--hemoprotein reductase] + O2 = 2-hydroxy-17beta-estradiol + oxidized [NADPH--hemoprotein reductase] + H2O + H(+). The enzyme catalyses 17beta-estradiol + reduced [NADPH--hemoprotein reductase] + O2 = 4-hydroxy-17beta-estradiol + oxidized [NADPH--hemoprotein reductase] + H2O + H(+). The catalysed reaction is 17beta-estradiol + reduced [NADPH--hemoprotein reductase] + O2 = 6alpha-hydroxy-17beta-estradiol + oxidized [NADPH--hemoprotein reductase] + H2O + H(+). It carries out the reaction 17beta-estradiol + reduced [NADPH--hemoprotein reductase] + O2 = 7alpha-hydroxy-17beta-estradiol + oxidized [NADPH--hemoprotein reductase] + H2O + H(+). It catalyses the reaction 17beta-estradiol + reduced [NADPH--hemoprotein reductase] + O2 = 15alpha-hydroxy-17beta-estradiol + oxidized [NADPH--hemoprotein reductase] + H2O + H(+). The enzyme catalyses (5Z,8Z,11Z)-eicosatrienoate + reduced [NADPH--hemoprotein reductase] + O2 = 19-hydroxy-(5Z,8Z,11Z)-eicosatrienoate + oxidized [NADPH--hemoprotein reductase] + H2O + H(+). The catalysed reaction is (5Z,8Z,11Z,14Z)-eicosatetraenoate + reduced [NADPH--hemoprotein reductase] + O2 = 16-hydroxy-(5Z,8Z,11Z,14Z)-eicosatetraenoate + oxidized [NADPH--hemoprotein reductase] + H2O + H(+). It carries out the reaction (5Z,8Z,11Z,14Z)-eicosatetraenoate + reduced [NADPH--hemoprotein reductase] + O2 = 17-hydroxy-(5Z,8Z,11Z,14Z)-eicosatetraenoate + oxidized [NADPH--hemoprotein reductase] + H2O + H(+). It catalyses the reaction (5Z,8Z,11Z,14Z)-eicosatetraenoate + reduced [NADPH--hemoprotein reductase] + O2 = 18-hydroxy-(5Z,8Z,11Z,14Z)-eicosatetraenoate + oxidized [NADPH--hemoprotein reductase] + H2O + H(+). The enzyme catalyses (5Z,8Z,11Z,14Z)-eicosatetraenoate + reduced [NADPH--hemoprotein reductase] + O2 = 19-hydroxy-(5Z,8Z,11Z,14Z)-eicosatetraenoate + oxidized [NADPH--hemoprotein reductase] + H2O + H(+). The catalysed reaction is (5Z,8Z,11Z,14Z,17Z)-eicosapentaenoate + reduced [NADPH--hemoprotein reductase] + O2 = 19-hydroxy-(5Z,8Z,11Z,14Z,17Z)-eicosapentaenoate + oxidized [NADPH--hemoprotein reductase] + H2O + H(+). It carries out the reaction (5Z,8Z,11Z,14Z)-eicosatetraenoate + reduced [NADPH--hemoprotein reductase] + O2 = (8R,9S)-epoxy-(5Z,11Z,14Z)-eicosatrienoate + oxidized [NADPH--hemoprotein reductase] + H2O + H(+). It catalyses the reaction (5Z,8Z,11Z,14Z)-eicosatetraenoate + reduced [NADPH--hemoprotein reductase] + O2 = (11R,12S)-epoxy-(5Z,8Z,14Z)-eicosatrienoate + oxidized [NADPH--hemoprotein reductase] + H2O + H(+). The enzyme catalyses (5Z,8Z,11Z,14Z)-eicosatetraenoate + reduced [NADPH--hemoprotein reductase] + O2 = (14S,15R)-epoxy-(5Z,8Z,11Z)-eicosatrienoate + oxidized [NADPH--hemoprotein reductase] + H2O + H(+). The catalysed reaction is (5Z,8Z,11Z,14Z)-eicosatetraenoate + reduced [NADPH--hemoprotein reductase] + O2 = (14R,15S)-epoxy-(5Z,8Z,11Z)-eicosatrienoate + oxidized [NADPH--hemoprotein reductase] + H2O + H(+). It carries out the reaction (5Z,8Z,11Z,14Z,17Z)-eicosapentaenoate + reduced [NADPH--hemoprotein reductase] + O2 = (17R,18S)-epoxy-(5Z,8Z,11Z,14Z)-eicosatetraenoate + oxidized [NADPH--hemoprotein reductase] + H2O + H(+). It catalyses the reaction (4Z,7Z,10Z,13Z,16Z,19Z)-docosahexaenoate + reduced [NADPH--hemoprotein reductase] + O2 = (19S,20R)-epoxy-(4Z,7Z,10Z,13Z,16Z)-docosapentaenoate + oxidized [NADPH--hemoprotein reductase] + H2O + H(+). The enzyme catalyses (4Z,7Z,10Z,13Z,16Z,19Z)-docosahexaenoate + reduced [NADPH--hemoprotein reductase] + O2 = (19R,20S)-epoxy-(4Z,7Z,10Z,13Z,16Z)-docosapentaenoate + oxidized [NADPH--hemoprotein reductase] + H2O + H(+). The catalysed reaction is all-trans-retinol + reduced [NADPH--hemoprotein reductase] + O2 = all-trans-retinal + oxidized [NADPH--hemoprotein reductase] + 2 H2O + H(+). It carries out the reaction all-trans-retinal + reduced [NADPH--hemoprotein reductase] + O2 = all-trans-retinoate + oxidized [NADPH--hemoprotein reductase] + H2O + 2 H(+). It catalyses the reaction (13S)-hydroperoxy-(9Z,11E)-octadecadienoate = 13-oxo-(9Z,11E)-octadecadienoate + H2O. The enzyme catalyses (12S)-hydroperoxy-(5Z,8Z,10E,14Z)-eicosatetraenoate = 12-oxo-(5Z,8Z,10E,14Z)-eicosatetraenoate + H2O. The catalysed reaction is (15S)-hydroperoxy-(5Z,8Z,11Z,13E)-eicosatetraenoate = 15-oxo-(5Z,8Z,11Z,13E)-eicosatetraenoate + H2O. It carries out the reaction (5S)-hydroperoxy-(6E,8Z,11Z,14Z)-eicosatetraenoate = 5-oxo-(6E,8Z,11Z,14Z)-eicosatetraenoate + H2O. It functions in the pathway steroid hormone biosynthesis. Its pathway is lipid metabolism; fatty acid metabolism. It participates in cofactor metabolism; retinol metabolism. Its function is as follows. A cytochrome P450 monooxygenase involved in the metabolism of various endogenous substrates, including fatty acids, steroid hormones and vitamins. Mechanistically, uses molecular oxygen inserting one oxygen atom into a substrate, and reducing the second into a water molecule, with two electrons provided by NADPH via cytochrome P450 reductase (CPR; NADPH-ferrihemoprotein reductase). Catalyzes the hydroxylation of carbon-hydrogen bonds. Exhibits high catalytic activity for the formation of hydroxyestrogens from estrone (E1) and 17beta-estradiol (E2), namely 2-hydroxy E1 and E2, as well as D-ring hydroxylated E1 and E2 at the C15alpha and C16alpha positions. Displays different regioselectivities for polyunsaturated fatty acids (PUFA) hydroxylation. Catalyzes the epoxidation of double bonds of certain PUFA. Converts arachidonic acid toward epoxyeicosatrienoic acid (EET) regioisomers, 8,9-, 11,12-, and 14,15-EET, that function as lipid mediators in the vascular system. Displays an absolute stereoselectivity in the epoxidation of eicosapentaenoic acid (EPA) producing the 17(R),18(S) enantiomer. May play an important role in all-trans retinoic acid biosynthesis in extrahepatic tissues. Catalyzes two successive oxidative transformation of all-trans retinol to all-trans retinal and then to the active form all-trans retinoic acid. May also participate in eicosanoids metabolism by converting hydroperoxide species into oxo metabolites (lipoxygenase-like reaction, NADPH-independent). The sequence is that of Cytochrome P450 1A1 (CYP1A1) from Oryctolagus cuniculus (Rabbit).